Consider the following 475-residue polypeptide: Coronin-2B (475 aa).

WD repeat units follow at residues 80–120, 130–172, 174–212, 215–258, and 260–303; these read GHQG…LKRN, GHSR…KMID, HTDV…VLQE, CKNH…MPVT, and EEID…PYLT. Positions 431–470 form a coiled coil; it reads NELLRMFFKQQEEIRRLKEQLSQRDLLVRQLELELKNLRN.

The protein belongs to the WD repeat coronin family.

The protein localises to the cytoplasm. It localises to the cytoskeleton. Its function is as follows. May play a role in the reorganization of neuronal actin structure. The chain is Coronin-2B (coro2b) from Xenopus laevis (African clawed frog).